Here is a 302-residue protein sequence, read N- to C-terminus: Phosphoribosylaminoimidazole-succinocarboxamide synthase (302 aa).

The protein belongs to the SAICAR synthetase family.

The catalysed reaction is 5-amino-1-(5-phospho-D-ribosyl)imidazole-4-carboxylate + L-aspartate + ATP = (2S)-2-[5-amino-1-(5-phospho-beta-D-ribosyl)imidazole-4-carboxamido]succinate + ADP + phosphate + 2 H(+). It functions in the pathway purine metabolism; IMP biosynthesis via de novo pathway; 5-amino-1-(5-phospho-D-ribosyl)imidazole-4-carboxamide from 5-amino-1-(5-phospho-D-ribosyl)imidazole-4-carboxylate: step 1/2. This chain is Phosphoribosylaminoimidazole-succinocarboxamide synthase, found in Polaromonas sp. (strain JS666 / ATCC BAA-500).